We begin with the raw amino-acid sequence, 239 residues long: MASTAVQLLGFLLSFLGMVGTLITTILPHWRRTAHVGTNILTAVSYLKGLWMECVWHSTGIYQCQIYRSLLALPRDLQAARALMVISCLLSGMACACAVVGMKCTRCAKGTPAKTTFAVLGGALFLLAGLLCMVAVSWTTNDVVQNFYNPLLPSGMKFEIGQALYLGFISSSLSLIGGTLLCLSCQDEAPYRPYPPQSRAGATTTATAPAYRPPAAYKDNRAPSVTSAAHSGYRLNDYV.

The Cytoplasmic portion of the chain corresponds to 1-7 (MASTAVQ). A helical membrane pass occupies residues 8–28 (LLGFLLSFLGMVGTLITTILP). Residues 29-81 (HWRRTAHVGTNILTAVSYLKGLWMECVWHSTGIYQCQIYRSLLALPRDLQAAR) are Extracellular-facing. The helical transmembrane segment at 82–102 (ALMVISCLLSGMACACAVVGM) threads the bilayer. Residues 103–115 (KCTRCAKGTPAKT) are Cytoplasmic-facing. The chain crosses the membrane as a helical span at residues 116 to 136 (TFAVLGGALFLLAGLLCMVAV). The Extracellular portion of the chain corresponds to 137–162 (SWTTNDVVQNFYNPLLPSGMKFEIGQ). A helical transmembrane segment spans residues 163 to 183 (ALYLGFISSSLSLIGGTLLCL). The Cytoplasmic portion of the chain corresponds to 184–239 (SCQDEAPYRPYPPQSRAGATTTATAPAYRPPAAYKDNRAPSVTSAAHSGYRLNDYV).

Belongs to the claudin family. In terms of tissue distribution, expressed in all sensory epithelia of the inner ear vestibular organs, as well as in liver and kidney.

It localises to the cell junction. Its subcellular location is the tight junction. The protein localises to the cell membrane. Plays a major role in tight junction-specific obliteration of the intercellular space, through calcium-independent cell-adhesion activity. The polypeptide is Claudin-14 (Cldn14) (Mus musculus (Mouse)).